Here is a 560-residue protein sequence, read N- to C-terminus: Formate--tetrahydrofolate ligase (560 aa).

69 to 76 contributes to the ATP binding site; sequence TPAGEGKS.

This sequence belongs to the formate--tetrahydrofolate ligase family.

The enzyme catalyses (6S)-5,6,7,8-tetrahydrofolate + formate + ATP = (6R)-10-formyltetrahydrofolate + ADP + phosphate. Its pathway is one-carbon metabolism; tetrahydrofolate interconversion. The sequence is that of Formate--tetrahydrofolate ligase from Listeria monocytogenes serotype 4a (strain HCC23).